The sequence spans 179 residues: NADH dehydrogenase [ubiquinone] 1 beta subcomplex subunit 9 (179 aa).

Ala2 carries the post-translational modification N-acetylalanine. Ser85 is subject to Phosphoserine. The disordered stretch occupies residues 136 to 162 (EVKQLQEETPPGGPLTEALPPARKEGD).

It belongs to the complex I LYR family. Mammalian complex I is composed of 45 different subunits.

It localises to the mitochondrion inner membrane. Functionally, accessory subunit of the mitochondrial membrane respiratory chain NADH dehydrogenase (Complex I), that is believed to be not involved in catalysis. Complex I functions in the transfer of electrons from NADH to the respiratory chain. The immediate electron acceptor for the enzyme is believed to be ubiquinone. The chain is NADH dehydrogenase [ubiquinone] 1 beta subcomplex subunit 9 (NDUFB9) from Homo sapiens (Human).